The chain runs to 272 residues: Cytochrome c oxidase subunit 3 (272 aa).

Helical transmembrane passes span 20 to 40 (PWPL…VLFM), 45 to 65 (GGGE…FTWW), 89 to 109 (GMIL…WAFF), 128 to 148 (VVAI…LSSG), 166 to 186 (AMQG…MQGF), 204 to 224 (FYMA…FLFI), and 248 to 268 (YWHF…WWGF).

This sequence belongs to the cytochrome c oxidase subunit 3 family. In terms of assembly, component of the cytochrome c oxidase (complex IV, CIV), a multisubunit enzyme composed of a catalytic core of 3 subunits and several supernumerary subunits. The complex exists as a monomer or a dimer and forms supercomplexes (SCs) in the inner mitochondrial membrane with ubiquinol-cytochrome c oxidoreductase (cytochrome b-c1 complex, complex III, CIII).

It is found in the mitochondrion inner membrane. It carries out the reaction 4 Fe(II)-[cytochrome c] + O2 + 8 H(+)(in) = 4 Fe(III)-[cytochrome c] + 2 H2O + 4 H(+)(out). Functionally, component of the cytochrome c oxidase, the last enzyme in the mitochondrial electron transport chain which drives oxidative phosphorylation. The respiratory chain contains 3 multisubunit complexes succinate dehydrogenase (complex II, CII), ubiquinol-cytochrome c oxidoreductase (cytochrome b-c1 complex, complex III, CIII) and cytochrome c oxidase (complex IV, CIV), that cooperate to transfer electrons derived from NADH and succinate to molecular oxygen, creating an electrochemical gradient over the inner membrane that drives transmembrane transport and the ATP synthase. Cytochrome c oxidase is the component of the respiratory chain that catalyzes the reduction of oxygen to water. Electrons originating from reduced cytochrome c in the intermembrane space (IMS) are transferred via the dinuclear copper A center (CU(A)) of subunit 2 and heme A of subunit 1 to the active site in subunit 1, a binuclear center (BNC) formed by heme A3 and copper B (CU(B)). The BNC reduces molecular oxygen to 2 water molecules using 4 electrons from cytochrome c in the IMS and 4 protons from the mitochondrial matrix. This is Cytochrome c oxidase subunit 3 (COX3) from Pylaiella littoralis (Seaweed).